The following is a 151-amino-acid chain: 3-hydroxyacyl-[acyl-carrier-protein] dehydratase FabZ (151 aa).

H49 is a catalytic residue.

The protein belongs to the thioester dehydratase family. FabZ subfamily.

It localises to the cytoplasm. The catalysed reaction is a (3R)-hydroxyacyl-[ACP] = a (2E)-enoyl-[ACP] + H2O. In terms of biological role, involved in unsaturated fatty acids biosynthesis. Catalyzes the dehydration of short chain beta-hydroxyacyl-ACPs and long chain saturated and unsaturated beta-hydroxyacyl-ACPs. The protein is 3-hydroxyacyl-[acyl-carrier-protein] dehydratase FabZ of Wolinella succinogenes (strain ATCC 29543 / DSM 1740 / CCUG 13145 / JCM 31913 / LMG 7466 / NCTC 11488 / FDC 602W) (Vibrio succinogenes).